Consider the following 559-residue polypeptide: Formate--tetrahydrofolate ligase (559 aa).

Residue 68-75 (TPAGEGKT) coordinates ATP.

The protein belongs to the formate--tetrahydrofolate ligase family.

It catalyses the reaction (6S)-5,6,7,8-tetrahydrofolate + formate + ATP = (6R)-10-formyltetrahydrofolate + ADP + phosphate. Its pathway is one-carbon metabolism; tetrahydrofolate interconversion. This chain is Formate--tetrahydrofolate ligase, found in Rhizobium rhizogenes (strain K84 / ATCC BAA-868) (Agrobacterium radiobacter).